The primary structure comprises 316 residues: C1GALT1-specific chaperone 1 (316 aa).

Topologically, residues 1-6 (MLSESS) are cytoplasmic. A helical; Signal-anchor for type II membrane protein membrane pass occupies residues 7-26 (SFLKGVMLGSIFCALITMLG). Topologically, residues 27–316 (HIRIGNRMHH…FLPPNGSEND (290 aa)) are lumenal.

The protein belongs to the glycosyltransferase 31 family. Beta3-Gal-T subfamily. In terms of assembly, associates with core 1 beta-3-galactosyltransferase (C1GALT1), probably not with the soluble active form.

The protein resides in the membrane. Probable chaperone required for the generation of 1 O-glycan Gal-beta1-3GalNAc-alpha1-Ser/Thr (T antigen), which is a precursor for many extended O-glycans in glycoproteins. Probably acts as a specific molecular chaperone assisting the folding/stability of core 1 beta-3-galactosyltransferase (C1GALT1). In Mus musculus (Mouse), this protein is C1GALT1-specific chaperone 1 (C1galt1c1).